We begin with the raw amino-acid sequence, 562 residues long: Protein wntless (562 aa).

Residues 1 to 13 (MSGTILENLSGRK) lie on the Cytoplasmic side of the membrane. A helical transmembrane segment spans residues 14–34 (LSILVGSLLLCQVLCFLLGGL). The Lumenal segment spans residues 35–239 (YAPVPAGHTN…AIHQNGGFTH (205 aa)). N-linked (GlcNAc...) asparagine glycosylation is present at N58. A helical membrane pass occupies residues 240-260 (VWLMLKTLLFPFVVGIMVWFW). Residues 261 to 270 (RRVHLLQRSP) are Cytoplasmic-facing. Residues 271 to 291 (ALLEYMLLYLGGALTFLNLPL) traverse the membrane as a helical segment. Residues 292–311 (EYLSLTIEMPYMLLLSDIRQ) are Lumenal-facing. A helical membrane pass occupies residues 312 to 332 (GIFYAMLLSFWLVFAGEHMLI). Residues 333–344 (QDSSNKSTIRSR) are Cytoplasmic-facing. A helical membrane pass occupies residues 345-365 (YWKHLSAVVVGCISLFVFDIS). Residues 366 to 386 (ERGVQLRNPFYSIWTTPLGAK) are Lumenal-facing. The chain crosses the membrane as a helical span at residues 387 to 407 (VAMSFILLAGVSAAVYFLFLC). Topologically, residues 408–441 (YMISKVFKNIGDKRTSLPSMSQARRLHYEGLIYR) are cytoplasmic. A helical membrane pass occupies residues 442-462 (FKFLMLATLLCAALTVTGFIM). Residues 463-482 (GQMAEGQWKWNDDVEIQLTS) are Lumenal-facing. The chain crosses the membrane as a helical span at residues 483-503 (AFLTGVYGMWNIYIFALLILY). Over 504-562 (APSHKQWPTMHHSDETTQSNENIVASAASEEIEFSNLPSDSNPSEISSLTSFTRKVAFE) the chain is Cytoplasmic. Residues 538–562 (SNLPSDSNPSEISSLTSFTRKVAFE) are disordered. Residues 539-556 (NLPSDSNPSEISSLTSFT) are compositionally biased toward polar residues.

The protein belongs to the wntless family. As to quaternary structure, interacts with wg; in the Golgi. Interacts with Vps35, a component of the retromer complex; wls stability is regulated by Vps35.

The protein localises to the presynaptic cell membrane. It is found in the postsynaptic cell membrane. The protein resides in the cell membrane. Its subcellular location is the endoplasmic reticulum membrane. It localises to the endosome membrane. The protein localises to the golgi apparatus membrane. Functionally, a segment polarity gene required for wingless (wg)-dependent patterning processes, acting in both wg-sending cells and wg-target cells. In non-neuronal cells wls directs wg secretion. The wls traffic loop encompasses the Golgi, the cell surface, an endocytic compartment and a retrograde route leading back to the Golgi, and involves clathrin-mediated endocytosis and the retromer complex (a conserved protein complex consisting of Vps35 and Vps26). In neuronal cells (the larval motorneuron NMJ), the wg signal moves across the synapse via the release of wls-containing exosome-like vesicles. Postsynaptic wls is required for the trafficking of fz2 through the fz2-interacting protein Grip. In Drosophila pseudoobscura pseudoobscura (Fruit fly), this protein is Protein wntless.